A 712-amino-acid chain; its full sequence is Polyribonucleotide nucleotidyltransferase (712 aa).

Mg(2+)-binding residues include Asp-487 and Asp-493. Residues 554 to 613 enclose the KH domain; the sequence is PRIHTMKISVEKIKDVIGKGGAVIRQLTEETGTTIEIEDDGTIKIAATDGDQAKEAIRRI. Residues 623 to 691 enclose the S1 motif domain; that stretch reads GVIYTGKVAR…RQGRVRLSMK (69 aa).

Belongs to the polyribonucleotide nucleotidyltransferase family. As to quaternary structure, component of the RNA degradosome, which is a multiprotein complex involved in RNA processing and mRNA degradation. Mg(2+) is required as a cofactor.

Its subcellular location is the cytoplasm. It carries out the reaction RNA(n+1) + phosphate = RNA(n) + a ribonucleoside 5'-diphosphate. Its function is as follows. Involved in mRNA degradation. Catalyzes the phosphorolysis of single-stranded polyribonucleotides processively in the 3'- to 5'-direction. This is Polyribonucleotide nucleotidyltransferase from Vibrio cholerae serotype O1 (strain ATCC 39541 / Classical Ogawa 395 / O395).